Here is a 266-residue protein sequence, read N- to C-terminus: Imidazole glycerol phosphate synthase subunit HisF (266 aa).

Active-site residues include Asp11 and Asp130.

Belongs to the HisA/HisF family. As to quaternary structure, heterodimer of HisH and HisF.

It is found in the cytoplasm. It carries out the reaction 5-[(5-phospho-1-deoxy-D-ribulos-1-ylimino)methylamino]-1-(5-phospho-beta-D-ribosyl)imidazole-4-carboxamide + L-glutamine = D-erythro-1-(imidazol-4-yl)glycerol 3-phosphate + 5-amino-1-(5-phospho-beta-D-ribosyl)imidazole-4-carboxamide + L-glutamate + H(+). It participates in amino-acid biosynthesis; L-histidine biosynthesis; L-histidine from 5-phospho-alpha-D-ribose 1-diphosphate: step 5/9. In terms of biological role, IGPS catalyzes the conversion of PRFAR and glutamine to IGP, AICAR and glutamate. The HisF subunit catalyzes the cyclization activity that produces IGP and AICAR from PRFAR using the ammonia provided by the HisH subunit. The chain is Imidazole glycerol phosphate synthase subunit HisF from Albidiferax ferrireducens (strain ATCC BAA-621 / DSM 15236 / T118) (Rhodoferax ferrireducens).